The following is a 271-amino-acid chain: Formamidopyrimidine-DNA glycosylase (271 aa).

P2 functions as the Schiff-base intermediate with DNA in the catalytic mechanism. E3 acts as the Proton donor in catalysis. K58 serves as the catalytic Proton donor; for beta-elimination activity. Residues H92, R111, and R152 each coordinate DNA. The FPG-type zinc-finger motif lies at 237-271 (FVYGRQQQPCKQCGSLLRQTTIRQRTTVWCGHCQG). The active-site Proton donor; for delta-elimination activity is the R261.

The protein belongs to the FPG family. In terms of assembly, monomer. Zn(2+) serves as cofactor.

It catalyses the reaction Hydrolysis of DNA containing ring-opened 7-methylguanine residues, releasing 2,6-diamino-4-hydroxy-5-(N-methyl)formamidopyrimidine.. The catalysed reaction is 2'-deoxyribonucleotide-(2'-deoxyribose 5'-phosphate)-2'-deoxyribonucleotide-DNA = a 3'-end 2'-deoxyribonucleotide-(2,3-dehydro-2,3-deoxyribose 5'-phosphate)-DNA + a 5'-end 5'-phospho-2'-deoxyribonucleoside-DNA + H(+). Involved in base excision repair of DNA damaged by oxidation or by mutagenic agents. Acts as a DNA glycosylase that recognizes and removes damaged bases. Has a preference for oxidized purines, such as 7,8-dihydro-8-oxoguanine (8-oxoG). Has AP (apurinic/apyrimidinic) lyase activity and introduces nicks in the DNA strand. Cleaves the DNA backbone by beta-delta elimination to generate a single-strand break at the site of the removed base with both 3'- and 5'-phosphates. The polypeptide is Formamidopyrimidine-DNA glycosylase (mutM1) (Xylella fastidiosa (strain 9a5c)).